Reading from the N-terminus, the 79-residue chain is Serine protease inhibitor Kazal-type 1 (79 aa).

The signal sequence occupies residues 1–23 (MKVASIFLLTALVLMSLSGNSGA). Residues 26 to 79 (LGREAKCTNEVNGCPRIYNPVCGTDGVTYSNECLLCMENKERQTPVLIQKSGPC) form the Kazal-like domain. Cystine bridges form between cysteine 32-cysteine 61, cysteine 39-cysteine 58, and cysteine 47-cysteine 79.

It is found in the secreted. Serine protease inhibitor which exhibits anti-trypsin activity. In the pancreas, protects against trypsin-catalyzed premature activation of zymogens. Functionally, in the male reproductive tract, binds to sperm heads where it modulates sperm capacitance by inhibiting calcium uptake and nitrogen oxide (NO) production. This Bos taurus (Bovine) protein is Serine protease inhibitor Kazal-type 1 (SPINK1).